The chain runs to 177 residues: Parathyroid hormone-related protein (177 aa).

The N-terminal stretch at Met-1–Gly-24 is a signal peptide. The propeptide occupies Arg-25–Leu-34. Residues Arg-57–His-68 form an important for receptor binding region. A disordered region spans residues Ala-74–His-177. Polar residues predominate over residues Ser-76–Asn-90. The Nuclear localization signal motif lies at Thr-108–Lys-129. Residues Asn-109–Pro-118 are compositionally biased toward basic and acidic residues. Residues Pro-122–Lys-132 are compositionally biased toward basic residues.

The protein belongs to the parathyroid hormone family. As to quaternary structure, PTHrP interacts with PTH1R (via N-terminal extracellular domain). In terms of processing, there are several secretory forms, including osteostatin, arising from endoproteolytic cleavage of the initial translation product. Each of these secretory forms is believed to have one or more of its own receptors that mediates the normal paracrine, autocrine and endocrine actions.

It localises to the secreted. The protein resides in the cytoplasm. Its subcellular location is the nucleus. Its function is as follows. Neuroendocrine peptide which is a critical regulator of cellular and organ growth, development, migration, differentiation and survival and of epithelial calcium ion transport. Acts by binding to its receptor, PTH1R, activating G protein-coupled receptor signaling. Regulates endochondral bone development and epithelial-mesenchymal interactions during the formation of the mammary glands and teeth. Required for skeletal homeostasis. Promotes mammary mesenchyme differentiation and bud outgrowth by modulating mesenchymal cell responsiveness to BMPs. Up-regulates BMPR1A expression in the mammary mesenchyme and this increases the sensitivity of these cells to BMPs and allows them to respond to BMP4 in a paracrine and/or autocrine fashion. BMP4 signaling in the mesenchyme, in turn, triggers epithelial outgrowth and augments MSX2 expression, which causes the mammary mesenchyme to inhibit hair follicle formation within the nipple sheath. In terms of biological role, potent inhibitor of osteoclastic bone resorption. This chain is Parathyroid hormone-related protein (PTHLH), found in Canis lupus familiaris (Dog).